Reading from the N-terminus, the 366-residue chain is DNA-directed RNA polymerase subunit alpha (366 aa).

The tract at residues 1-260 (MAISDNGGGS…DQLQSFIGSE (260 aa)) is alpha N-terminal domain (alpha-NTD). Positions 274-366 (EGALPYDHNL…ENLSKQYSED (93 aa)) are alpha C-terminal domain (alpha-CTD).

It belongs to the RNA polymerase alpha chain family. As to quaternary structure, homodimer. The RNAP catalytic core consists of 2 alpha, 1 beta, 1 beta' and 1 omega subunit. When a sigma factor is associated with the core the holoenzyme is formed, which can initiate transcription.

It carries out the reaction RNA(n) + a ribonucleoside 5'-triphosphate = RNA(n+1) + diphosphate. Its function is as follows. DNA-dependent RNA polymerase catalyzes the transcription of DNA into RNA using the four ribonucleoside triphosphates as substrates. The sequence is that of DNA-directed RNA polymerase subunit alpha from Anaplasma marginale (strain St. Maries).